Consider the following 393-residue polypeptide: Pre-mRNA-splicing regulator WTAP (393 aa).

Positions 242–393 (QIQISGNRTP…SSVNVQGSVL (152 aa)) are disordered. Residues 254-267 (EPKDEGETSGKDCG) show a composition bias toward basic and acidic residues. 2 stretches are compositionally biased toward polar residues: residues 272 to 286 (GPSN…THSS) and 321 to 353 (DGSS…SNDT). Over residues 354-365 (DSNHDSQEEKPV) the composition is skewed to basic and acidic residues. Residues 369–393 (GNRTVSSRHLQNGLDSSVNVQGSVL) show a composition bias toward polar residues.

The protein belongs to the fl(2)d family. Component of the WMM complex, a N6-methyltransferase complex composed of a catalytic subcomplex, named MAC, and of an associated subcomplex, named MACOM. Component of the MACOM subcomplex.

The protein resides in the nucleus speckle. It localises to the nucleus. Its subcellular location is the nucleoplasm. Functionally, associated component of the WMM complex, a complex that mediates N6-methyladenosine (m6A) methylation of RNAs, a modification that plays a role in the efficiency of mRNA splicing and RNA processing. This is Pre-mRNA-splicing regulator WTAP from Xenopus laevis (African clawed frog).